The chain runs to 205 residues: MGIGMDSSTMSGPLVAHSGILDGDYEKRPAVCKMQMRFDLANVGLRVLSLACSLVALVSMASNQESGVVTVFGFKLPVYSKWSYSDSFEFLVGASAAAAAHSLLQLLLCGMKMVKRASTIPSRNHAWLLFAGDQVFAYGMLAAASAAAGVTNLNRTGFRHSDLPNFCKPLHRFCDKAAISIVFAFISSLILGGSAVLDVFWLSKN.

The Cytoplasmic portion of the chain corresponds to 1–39 (MGIGMDSSTMSGPLVAHSGILDGDYEKRPAVCKMQMRFD). Residues 40–60 (LANVGLRVLSLACSLVALVSM) form a helical membrane-spanning segment. The Extracellular portion of the chain corresponds to 61–89 (ASNQESGVVTVFGFKLPVYSKWSYSDSFE). The chain crosses the membrane as a helical span at residues 90 to 110 (FLVGASAAAAAHSLLQLLLCG). At 111–125 (MKMVKRASTIPSRNH) the chain is on the cytoplasmic side. A helical transmembrane segment spans residues 126–146 (AWLLFAGDQVFAYGMLAAASA). Topologically, residues 147 to 176 (AAGVTNLNRTGFRHSDLPNFCKPLHRFCDK) are extracellular. The N-linked (GlcNAc...) asparagine glycan is linked to Asn154. Residues 177–197 (AAISIVFAFISSLILGGSAVL) traverse the membrane as a helical segment. Topologically, residues 198 to 205 (DVFWLSKN) are cytoplasmic.

Belongs to the Casparian strip membrane proteins (CASP) family. In terms of assembly, homodimer and heterodimers.

It is found in the cell membrane. The polypeptide is CASP-like protein 3A1 (Picea sitchensis (Sitka spruce)).